The following is a 369-amino-acid chain: Glycolate oxidase 1 (369 aa).

Positions 1-360 constitute an FMN hydroxy acid dehydrogenase domain; the sequence is MGEITNVMEY…TRAHIYTDAD (360 aa). Y25 contacts glyoxylate. Residues 78-80, S107, 128-130, and T156 each bind FMN; these read PSA and QLY. Position 130 (Y130) interacts with glyoxylate. R165 serves as a coordination point for glyoxylate. FMN is bound by residues K231 and S253. 2 residues coordinate glyoxylate: H255 and R258. Residue H255 is the Proton acceptor of the active site. Residues 286–290 and 309–310 each bind FMN; these read DGGVR and GR. The Microbody targeting signal signature appears at 367-369; it reads PRL.

The protein belongs to the FMN-dependent alpha-hydroxy acid dehydrogenase family. In terms of assembly, homotetramer. Interacts with rice dwarf virus (RDV) P8. This interaction promotes viral P8 relocation to virus factories peripheral to peroxisomes. It depends on FMN as a cofactor.

It localises to the peroxisome. The enzyme catalyses glycolate + O2 = glyoxylate + H2O2. Its pathway is photosynthesis; photorespiration; glycine from 2-phosphoglycolate: step 2/3. In terms of biological role, catalyzes the oxidation of glycolate to glyoxylate, with a reduction of O2 to H2O2. Is a key enzyme in photorespiration in plants. Can exert a strong regulation over photosynthesis, possibly through a feed-back inhibition on Rubisco activase. Does not seem to play a role in oxalate accumulation. The chain is Glycolate oxidase 1 (GLO1) from Oryza sativa subsp. indica (Rice).